A 356-amino-acid chain; its full sequence is Protein-arginine kinase (356 aa).

The 231-residue stretch at 24-254 (IVLSTRIRLA…HQLIQQEKAA (231 aa)) folds into the Phosphagen kinase C-terminal domain. ATP-binding positions include 27 to 31 (STRIR), His-92, Arg-125, 176 to 180 (RASVM), and 207 to 212 (RGIYGE). Positions 337-342 (RDYRRA) match the RDXXRA motif of the pArg binding pocket involved in allosteric regulation motif.

It belongs to the ATP:guanido phosphotransferase family.

The enzyme catalyses L-arginyl-[protein] + ATP = N(omega)-phospho-L-arginyl-[protein] + ADP + H(+). With respect to regulation, appears to be allosterically activated by the binding of pArg-containing polypeptides to the pArg-binding pocket localized in the C-terminal domain of McsB. In terms of biological role, catalyzes the specific phosphorylation of arginine residues in a large number of proteins. Is part of the bacterial stress response system. Protein arginine phosphorylation has a physiologically important role and is involved in the regulation of many critical cellular processes, such as protein homeostasis, motility, competence, and stringent and stress responses, by regulating gene expression and protein activity. In Bacillus cytotoxicus (strain DSM 22905 / CIP 110041 / 391-98 / NVH 391-98), this protein is Protein-arginine kinase.